A 337-amino-acid chain; its full sequence is Glyceraldehyde-3-phosphate dehydrogenase (337 aa).

NAD(+) is bound by residues 11 to 12 (RI), aspartate 33, and lysine 78. D-glyceraldehyde 3-phosphate contacts are provided by residues 149–151 (SCT), threonine 180, 209–210 (TG), and arginine 232. Cysteine 150 acts as the Nucleophile in catalysis. Asparagine 314 contributes to the NAD(+) binding site.

The protein belongs to the glyceraldehyde-3-phosphate dehydrogenase family. Homotetramer.

The protein localises to the cytoplasm. The enzyme catalyses D-glyceraldehyde 3-phosphate + phosphate + NAD(+) = (2R)-3-phospho-glyceroyl phosphate + NADH + H(+). Its pathway is carbohydrate degradation; glycolysis; pyruvate from D-glyceraldehyde 3-phosphate: step 1/5. This is Glyceraldehyde-3-phosphate dehydrogenase (GPD) from Lyophyllum shimeji (Hon-shimeji).